The primary structure comprises 488 residues: N-succinylglutamate 5-semialdehyde dehydrogenase (488 aa).

Residue 221–226 participates in NAD(+) binding; the sequence is GSSRTG. Active-site residues include E244 and C278.

It belongs to the aldehyde dehydrogenase family. AstD subfamily.

It carries out the reaction N-succinyl-L-glutamate 5-semialdehyde + NAD(+) + H2O = N-succinyl-L-glutamate + NADH + 2 H(+). It functions in the pathway amino-acid degradation; L-arginine degradation via AST pathway; L-glutamate and succinate from L-arginine: step 4/5. Functionally, catalyzes the NAD-dependent reduction of succinylglutamate semialdehyde into succinylglutamate. This chain is N-succinylglutamate 5-semialdehyde dehydrogenase, found in Pseudomonas syringae pv. syringae (strain B728a).